A 241-amino-acid polypeptide reads, in one-letter code: Uridylate kinase (241 aa).

15–18 (KLSG) is an ATP binding site. The segment at 23–28 (GSEGFG) is involved in allosteric activation by GTP. Residue Gly57 coordinates UMP. Residues Gly58 and Arg62 each contribute to the ATP site. UMP-binding positions include Asp77 and 138 to 145 (TGNPFFTT). Positions 165, 171, and 174 each coordinate ATP.

This sequence belongs to the UMP kinase family. In terms of assembly, homohexamer.

It is found in the cytoplasm. It carries out the reaction UMP + ATP = UDP + ADP. It functions in the pathway pyrimidine metabolism; CTP biosynthesis via de novo pathway; UDP from UMP (UMPK route): step 1/1. Its activity is regulated as follows. Allosterically activated by GTP. Inhibited by UTP. In terms of biological role, catalyzes the reversible phosphorylation of UMP to UDP. In Vibrio vulnificus (strain CMCP6), this protein is Uridylate kinase.